Reading from the N-terminus, the 406-residue chain is Phosphopentomutase (406 aa).

Residues aspartate 10, aspartate 305, histidine 310, aspartate 346, histidine 347, and histidine 358 each coordinate Mn(2+).

It belongs to the phosphopentomutase family. Mn(2+) serves as cofactor.

It localises to the cytoplasm. It carries out the reaction 2-deoxy-alpha-D-ribose 1-phosphate = 2-deoxy-D-ribose 5-phosphate. The catalysed reaction is alpha-D-ribose 1-phosphate = D-ribose 5-phosphate. The protein operates within carbohydrate degradation; 2-deoxy-D-ribose 1-phosphate degradation; D-glyceraldehyde 3-phosphate and acetaldehyde from 2-deoxy-alpha-D-ribose 1-phosphate: step 1/2. In terms of biological role, isomerase that catalyzes the conversion of deoxy-ribose 1-phosphate (dRib-1-P) and ribose 1-phosphate (Rib-1-P) to deoxy-ribose 5-phosphate (dRib-5-P) and ribose 5-phosphate (Rib-5-P), respectively. This is Phosphopentomutase from Agrobacterium fabrum (strain C58 / ATCC 33970) (Agrobacterium tumefaciens (strain C58)).